Consider the following 332-residue polypeptide: T-cell surface glycoprotein CD1c3 (332 aa).

The first 17 residues, 1–17, serve as a signal peptide directing secretion; it reads MLFLQFLFLDVVLGGSI. Residues 18 to 300 are Extracellular-facing; that stretch reads TKNVVQENIS…IILYWGHGLS (283 aa). 4 N-linked (GlcNAc...) asparagine glycosylation sites follow: N25, N38, N75, and N146. 2 disulfide bridges follow: C120/C184 and C224/C279. The Ig-like domain maps to 205–292; the sequence is PEVWLSSSPN…HSSLRDQDII (88 aa). Residues 301–321 form a helical membrane-spanning segment; it reads VILITFAVIVPLVLLIILVLL. At 322–332 the chain is on the cytoplasmic side; the sequence is CKKCCTYQGIP.

In terms of assembly, heterodimer with B2M (beta-2-microglobulin).

It is found in the cell membrane. The protein localises to the endosome membrane. Antigen-presenting protein that binds self and non-self lipid and glycolipid antigens and presents them to T-cell receptors on natural killer T-cells. The sequence is that of T-cell surface glycoprotein CD1c3 (CD1C3) from Cavia porcellus (Guinea pig).